The chain runs to 75 residues: U6-lycotoxin-Ls1d (75 aa).

The N-terminal stretch at methionine 1–alanine 21 is a signal peptide. Residues glutamate 22 to arginine 25 constitute a propeptide that is removed on maturation.

This sequence belongs to the neurotoxin 19 (CSTX) family. 06 (U6-Lctx) subfamily. In terms of processing, contains 4 disulfide bonds. In terms of tissue distribution, expressed by the venom gland.

It localises to the secreted. The protein is U6-lycotoxin-Ls1d of Lycosa singoriensis (Wolf spider).